Reading from the N-terminus, the 671-residue chain is DNA ligase (671 aa).

Residues 32–36, 81–82, and Glu113 contribute to the NAD(+) site; these read DAEYD and SL. The active-site N6-AMP-lysine intermediate is Lys115. Residues Arg136, Glu173, Lys290, and Lys314 each coordinate NAD(+). The Zn(2+) site is built by Cys408, Cys411, Cys426, and Cys432. Positions 593 to 671 constitute a BRCT domain; it reads EIDSPFAGKT…ETEMLRLLGS (79 aa).

The protein belongs to the NAD-dependent DNA ligase family. LigA subfamily. Mg(2+) is required as a cofactor. The cofactor is Mn(2+).

The catalysed reaction is NAD(+) + (deoxyribonucleotide)n-3'-hydroxyl + 5'-phospho-(deoxyribonucleotide)m = (deoxyribonucleotide)n+m + AMP + beta-nicotinamide D-nucleotide.. Functionally, DNA ligase that catalyzes the formation of phosphodiester linkages between 5'-phosphoryl and 3'-hydroxyl groups in double-stranded DNA using NAD as a coenzyme and as the energy source for the reaction. It is essential for DNA replication and repair of damaged DNA. The polypeptide is DNA ligase (Escherichia coli O6:H1 (strain CFT073 / ATCC 700928 / UPEC)).